We begin with the raw amino-acid sequence, 529 residues long: Scarecrow-like protein 13 (529 aa).

Polar residues predominate over residues 51–81; that stretch reads ASGSLPSYDSPSVSITSGRSPFSPQGSQSCI. The disordered stretch occupies residues 51 to 84; sequence ASGSLPSYDSPSVSITSGRSPFSPQGSQSCISDL. Residues 146–525 enclose the GRAS domain; that stretch reads LLALTPQLDL…RPMATCSVWK (380 aa). The segment at 153 to 213 is leucine repeat I (LRI); sequence LDLKEVLVEA…RARLEGSGSN (61 aa). The interval 232-297 is VHIID; it reads MSVLYEICPY…GGPPLLRVTG (66 aa). The VHIID motif lies at 263–267; that stretch reads VHIID. The tract at residues 313–345 is leucine repeat II (LRII); sequence LVGERLATLAQSCGVPFEFHDAIMSGCKVQREH. A PFYRE region spans residues 354–448; it reads VVVNFPYVLH…QHCVARDIVN (95 aa). Positions 451–525 are SAW; it reads ACEESERVER…RPMATCSVWK (75 aa).

This sequence belongs to the GRAS family. Expressed in roots, hypocotyls, cotyledons, shoot apex, leaves, flowers and siliques.

The protein localises to the cytoplasm. It is found in the nucleus. Its function is as follows. Probable transcription factor that acts as a positive regulator of continuous red light signals downstream of phytochrome B (phyB). Required for the regulation of hypocotyl elongation during de-etiolation. May be required to modulate phytochrome A (phyA) signal transduction in a phyB-independent way. This Arabidopsis thaliana (Mouse-ear cress) protein is Scarecrow-like protein 13 (SCL13).